The chain runs to 34 residues: U10-ctenitoxin-Pr1a (34 aa).

4 disulfides stabilise this stretch: Cys2–Cys15, Cys9–Cys20, Cys14–Cys31, and Cys22–Cys29.

As to expression, expressed by the venom gland.

Its subcellular location is the secreted. Functionally, non-toxic to mice and insects. In Phoneutria reidyi (Brazilian Amazonian armed spider), this protein is U10-ctenitoxin-Pr1a.